Reading from the N-terminus, the 463-residue chain is MRDLILFLSLLHTIFASLFSLKPPSQDDFYKAPAGFKAAKPGDILKTRKSPNKPSSLYAPVDVQNSWQLLVRSEDSFGNPNAFVTTIIQPKNADPSKVVSYQNWEDASNINCSPSYGSQLGAPLSTILTQLDMTFIVPPLKSGYYVVLPDYEGPKSTFGVGRQSGKATLDSIKAVLKTKDFSGINDDAKVVLWGYSGGSFASGWAAVLQPEYAPELKDNLIGAALGGFAANLTGIAESVDGEVFSGFIPLALNGIANEYPDFKKRLYEEVKPGAKADLQKGAENCLAASLISYPMYQYFTGPRRVFEKGWSLLEDKTIGKTLEDNLLIALSKEHMPQIPIFVYHGTIDKIIPIKDSIKIYKNWCDWGIGSFEFSEDKSNGHTTETVVGAPAALTWIDARFAGKPAVEGCSFTTRASNFLYPNISESAASYFKGIYQTILRSKLGSGVTSDDVSVNGLRSLYHT.

The first 16 residues, 1 to 16 (MRDLILFLSLLHTIFA), serve as a signal peptide directing secretion. A disulfide bridge connects residues cysteine 112 and cysteine 285. The active-site Charge relay system is the serine 196. Residue asparagine 231 is glycosylated (N-linked (GlcNAc...) asparagine). Catalysis depends on charge relay system residues aspartate 348 and histidine 381. The cysteines at positions 364 and 409 are disulfide-linked. An N-linked (GlcNAc...) asparagine glycan is attached at asparagine 422.

Belongs to the AB hydrolase superfamily. Lipase family. Class Lip subfamily.

It is found in the secreted. The enzyme catalyses a triacylglycerol + H2O = a diacylglycerol + a fatty acid + H(+). Secreted lipase that is able to hydrolyze both the neutral triacylglycerols and the monopalmitate ester Tween 40, allowing the use of hydrolyzed products as carbon sources. Has broad lipolytic activity, which may be important for colonization and subsequent infection, therefore contributing to the persistence and virulence in human tissue. The chain is Lipase 6 from Candida albicans (strain SC5314 / ATCC MYA-2876) (Yeast).